A 360-amino-acid chain; its full sequence is DNA replication and repair protein RecF (360 aa).

30 to 37 provides a ligand contact to ATP; sequence GHNGSGKT.

Belongs to the RecF family.

The protein resides in the cytoplasm. Functionally, the RecF protein is involved in DNA metabolism; it is required for DNA replication and normal SOS inducibility. RecF binds preferentially to single-stranded, linear DNA. It also seems to bind ATP. This chain is DNA replication and repair protein RecF, found in Actinobacillus pleuropneumoniae serotype 3 (strain JL03).